Consider the following 397-residue polypeptide: CCA-adding enzyme (397 aa).

Residues Gly-26 and Arg-29 each coordinate ATP. The CTP site is built by Gly-26 and Arg-29. Residues Asp-39 and Asp-41 each contribute to the Mg(2+) site. ATP-binding residues include Arg-110, Asp-153, Arg-156, Arg-159, and Arg-162. Residues Arg-110, Asp-153, Arg-156, Arg-159, and Arg-162 each coordinate CTP.

The protein belongs to the tRNA nucleotidyltransferase/poly(A) polymerase family. Bacterial CCA-adding enzyme type 3 subfamily. Homodimer. Mg(2+) serves as cofactor.

The catalysed reaction is a tRNA precursor + 2 CTP + ATP = a tRNA with a 3' CCA end + 3 diphosphate. It catalyses the reaction a tRNA with a 3' CCA end + 2 CTP + ATP = a tRNA with a 3' CCACCA end + 3 diphosphate. Catalyzes the addition and repair of the essential 3'-terminal CCA sequence in tRNAs without using a nucleic acid template. Adds these three nucleotides in the order of C, C, and A to the tRNA nucleotide-73, using CTP and ATP as substrates and producing inorganic pyrophosphate. tRNA 3'-terminal CCA addition is required both for tRNA processing and repair. Also involved in tRNA surveillance by mediating tandem CCA addition to generate a CCACCA at the 3' terminus of unstable tRNAs. While stable tRNAs receive only 3'-terminal CCA, unstable tRNAs are marked with CCACCA and rapidly degraded. The polypeptide is CCA-adding enzyme (Bacillus cereus (strain AH187)).